Consider the following 128-residue polypeptide: uncharacterized protein (128 aa).

Helical transmembrane passes span 13 to 35, 42 to 64, and 90 to 112; these read FQMA…VFFV, IIAL…YNGG, and LVLT…SIIL.

It is found in the cell membrane. This is an uncharacterized protein from Methanocaldococcus jannaschii (strain ATCC 43067 / DSM 2661 / JAL-1 / JCM 10045 / NBRC 100440) (Methanococcus jannaschii).